The following is a 141-amino-acid chain: Nucleoside diphosphate kinase (141 aa).

Lys11, Phe59, Arg87, Thr93, Arg104, and Asn114 together coordinate ATP. The active-site Pros-phosphohistidine intermediate is the His117.

It belongs to the NDK family. In terms of assembly, homotetramer. Mg(2+) is required as a cofactor.

The protein localises to the cytoplasm. The enzyme catalyses a 2'-deoxyribonucleoside 5'-diphosphate + ATP = a 2'-deoxyribonucleoside 5'-triphosphate + ADP. It carries out the reaction a ribonucleoside 5'-diphosphate + ATP = a ribonucleoside 5'-triphosphate + ADP. Major role in the synthesis of nucleoside triphosphates other than ATP. The ATP gamma phosphate is transferred to the NDP beta phosphate via a ping-pong mechanism, using a phosphorylated active-site intermediate. The polypeptide is Nucleoside diphosphate kinase (Stenotrophomonas maltophilia (strain R551-3)).